Consider the following 464-residue polypeptide: Cytoplasmic tRNA 2-thiolation protein 2 (464 aa).

This sequence belongs to the CTU2/NCS2 family.

The protein resides in the cytoplasm. Its pathway is tRNA modification; 5-methoxycarbonylmethyl-2-thiouridine-tRNA biosynthesis. Plays a central role in 2-thiolation of mcm(5)S(2)U at tRNA wobble positions of tRNA(Lys), tRNA(Glu) and tRNA(Gln). May act by forming a heterodimer with NCS6/CTU1 that ligates sulfur from thiocarboxylated URM1 onto the uridine of tRNAs at wobble position. The polypeptide is Cytoplasmic tRNA 2-thiolation protein 2 (Oryza sativa subsp. japonica (Rice)).